Consider the following 285-residue polypeptide: Phasyl DNA replicon protein arp (285 aa).

Essential for autonomous replication of the phasyl DNA replicon. The sequence is that of Phasyl DNA replicon protein arp (arp) from Escherichia coli.